A 553-amino-acid polypeptide reads, in one-letter code: Cytokine-like nuclear factor N-PAC (553 aa).

A PWWP domain is found at 8–66; it reads LGDLVWGKLGRYPPWPGKIVNPPKDLKKPRGKKCFFVKFFGTEDHAWIKVEQLKPYHAH. 2 stretches are compositionally biased toward basic and acidic residues: residues 92–145 and 162–182; these read RAKG…EGKK and RAQEQSPRKRGRPPKDEKDLT. The interval 92–188 is disordered; it reads RAKGKDQTSS…KDLTIPESST (97 aa). Ser-130 bears the Phosphoserine mark. Lys-135 is covalently cross-linked (Glycyl lysine isopeptide (Lys-Gly) (interchain with G-Cter in SUMO2)). Ser-167 is modified (phosphoserine). The segment at residues 168–180 is a DNA-binding region (a.T hook); it reads PRKRGRPPKDEKD. Residues Lys-176, Lys-179, Lys-201, and Lys-211 each participate in a glycyl lysine isopeptide (Lys-Gly) (interchain with G-Cter in SUMO2) cross-link. The tract at residues 214 to 217 is interaction with histone H3; that stretch reads DPHF. Residues 216 to 225 are interaction with KDM1B; it reads HFHHFLLSQT. Glycyl lysine isopeptide (Lys-Gly) (interchain with G-Cter in SUMO2) cross-links involve residues Lys-227, Lys-237, Lys-240, and Lys-269. Residues 261–553 form a dehydrogenase domain region; that stretch reads GSITPTDKKI…MSAVYRAYIH (293 aa). Residue 271–285 coordinates NAD(+); it reads GFLGLGLMGSGIVSN. Lys-302 is covalently cross-linked (Glycyl lysine isopeptide (Lys-Gly) (interchain with G-Cter in SUMO2)). Positions 362 and 505 each coordinate NAD(+). Phosphoserine is present on Ser-540.

Belongs to the HIBADH-related family. NP60 subfamily. As to quaternary structure, homotetramere. Interacts with MAPK14. Interacts with KDM1B at nucleosomes; this interaction stimulates H3K4me1 and H3K4me2 demethylation. Binds to mononucleosomes. Interacts with GATA4; the interaction is required for a synergistic activation of GATA4 target genes transcription.

It localises to the nucleus. It is found in the chromosome. In terms of biological role, cytokine-like nuclear factor with chromatin gene reader activity involved in chromatin modification and regulation of gene expression. Acts as a nucleosome-destabilizing factor that is recruited to genes during transcriptional activation. Recognizes and binds histone H3 without a preference for specific epigenetic markers and also binds DNA. Interacts with KDM1B and promotes its histone demethylase activity by facilitating the capture of H3 tails, they form a multifunctional enzyme complex that modifies transcribed chromatin and facilitates Pol II transcription through nucleosomes. Stimulates the acetylation of 'Lys-56' of nucleosomal histone H3 (H3K56ac) by EP300. With GATA4, co-binds a defined set of heart development genes and coregulates their expression during cardiomyocyte differentiation. Regulates p38 MAP kinase activity by mediating stress activation of MAPK14/p38alpha and specifically regulating MAPK14 signaling. Indirectly promotes phosphorylation of MAPK14 and activation of ATF2. The phosphorylation of MAPK14 requires upstream activity of MAP2K4 and MAP2K6. The polypeptide is Cytokine-like nuclear factor N-PAC (Homo sapiens (Human)).